The following is a 417-amino-acid chain: Spermidine/putrescine import ATP-binding protein PotA (417 aa).

Positions 5 to 308 constitute an ABC transporter domain; that stretch reads IILKDLTKVF…PANRFVAQFV (304 aa). 37–44 contributes to the ATP binding site; that stretch reads GPSGCGKT. The tract at residues 105–177 is insert; it reads DFNSKIKANL…TALKCKKINK (73 aa).

It belongs to the ABC transporter superfamily. Spermidine/putrescine importer (TC 3.A.1.11.1) family. In terms of assembly, the complex is composed of two ATP-binding proteins (PotA), two transmembrane proteins (PotB and PotC) and a solute-binding protein (PotD).

The protein localises to the cell membrane. It carries out the reaction ATP + H2O + polyamine-[polyamine-binding protein]Side 1 = ADP + phosphate + polyamineSide 2 + [polyamine-binding protein]Side 1.. In terms of biological role, part of the ABC transporter complex PotABCD involved in spermidine/putrescine import. Responsible for energy coupling to the transport system. The protein is Spermidine/putrescine import ATP-binding protein PotA of Onion yellows phytoplasma (strain OY-M).